The following is a 195-amino-acid chain: uncharacterized protein (195 aa).

An HTH tetR-type domain is found at 10 to 70; sequence EETVARLLQA…ATAYEVLRRQ (61 aa). The H-T-H motif DNA-binding region spans 33–52; the sequence is SAAVITKRAGVSVGALFRHF.

This is an uncharacterized protein from Mycobacterium tuberculosis (strain CDC 1551 / Oshkosh).